A 66-amino-acid polypeptide reads, in one-letter code: Large ribosomal subunit protein bL35 (66 aa).

Basic residues-rich tracts occupy residues 1–16 (MPKQ…RFKR) and 31–45 (HRFH…RQLR). The interval 1 to 52 (MPKQKTHRASAKRFKRTGNGGLKRSNAYTSHRFHGKTKKQRRQLRKASMVSA) is disordered.

The protein belongs to the bacterial ribosomal protein bL35 family.

In Ligilactobacillus salivarius (strain UCC118) (Lactobacillus salivarius), this protein is Large ribosomal subunit protein bL35.